We begin with the raw amino-acid sequence, 801 residues long: LPS-assembly protein LptD (801 aa).

An N-terminal signal peptide occupies residues 1–23 (MARLFSLKPLVLALGFCFGTHCA).

Belongs to the LptD family. Component of the lipopolysaccharide transport and assembly complex. Interacts with LptE and LptA.

The protein resides in the cell outer membrane. Functionally, together with LptE, is involved in the assembly of lipopolysaccharide (LPS) at the surface of the outer membrane. This chain is LPS-assembly protein LptD, found in Neisseria gonorrhoeae (strain ATCC 700825 / FA 1090).